Consider the following 159-residue polypeptide: RxLR effector protein 24 (159 aa).

The N-terminal stretch at 1–18 (MRFLVWVFFVGLVTFVSG) is a signal peptide. The RxLR-dEER signature appears at 58-82 (RFLRSNANQDLTTANDDSDVKEEER). Positions 109-159 (EKAFQHMMKQGETPTSLAKRLEIGGAAELRYEKVYEKYTAWWINYHTVAGT) are RABA-binding domain.

Belongs to the RxLR effector family. In terms of assembly, interacts with potato RABA GTPases including RABA1a, RABA2a and RABA4a.

The protein localises to the secreted. It is found in the host cell membrane. It localises to the host endomembrane system. Effector protein that contributes to pathogen virulence. Targets members of the RABA GTPases subfamily to inhibit vesicular secretion, leading to an accumulation of secretory proteins in the endoplasmic reticulum. This is RxLR effector protein 24 from Phytophthora infestans (strain T30-4) (Potato late blight agent).